A 103-amino-acid polypeptide reads, in one-letter code: Putative RNA-binding protein RbpB (103 aa).

The region spanning 2–79 (SIYVGNLSYD…RDLKVNKAKP (78 aa)) is the RRM domain. The segment covering 74–85 (VNKAKPREDRGG) has biased composition (basic and acidic residues). Residues 74-103 (VNKAKPREDRGGSRGSFGGNRSNNNFRNRY) form a disordered region. Low complexity predominate over residues 92–103 (GNRSNNNFRNRY).

The protein is Putative RNA-binding protein RbpB (rbpB) of Nostoc sp. (strain PCC 7120 / SAG 25.82 / UTEX 2576).